The primary structure comprises 345 residues: tRNA N6-adenosine threonylcarbamoyltransferase (345 aa).

H109 and H113 together coordinate Fe cation. Substrate contacts are provided by residues 136–140, D169, G182, D186, and N284; that span reads TVSGG. Residue D312 coordinates Fe cation.

Belongs to the KAE1 / TsaD family. Fe(2+) serves as cofactor.

It is found in the cytoplasm. It carries out the reaction L-threonylcarbamoyladenylate + adenosine(37) in tRNA = N(6)-L-threonylcarbamoyladenosine(37) in tRNA + AMP + H(+). Required for the formation of a threonylcarbamoyl group on adenosine at position 37 (t(6)A37) in tRNAs that read codons beginning with adenine. Is involved in the transfer of the threonylcarbamoyl moiety of threonylcarbamoyl-AMP (TC-AMP) to the N6 group of A37, together with TsaE and TsaB. TsaD likely plays a direct catalytic role in this reaction. This Prosthecochloris aestuarii (strain DSM 271 / SK 413) protein is tRNA N6-adenosine threonylcarbamoyltransferase.